Reading from the N-terminus, the 142-residue chain is Pleckstrin homology-like domain family A member 2 (142 aa).

Phosphoserine is present on Ser3. The PH domain occupies 7–99 (VLREGELEKR…WNASITLALI (93 aa)).

The protein belongs to the PHLDA2 family.

It is found in the cytoplasm. The protein resides in the membrane. Plays a role in regulating placenta growth. May act via its PH domain that competes with other PH domain-containing proteins, thereby preventing their binding to membrane lipids. The protein is Pleckstrin homology-like domain family A member 2 (PHLDA2) of Bos taurus (Bovine).